A 226-amino-acid polypeptide reads, in one-letter code: UPF0173 metal-dependent hydrolase Fnod_0635 (226 aa).

This sequence belongs to the UPF0173 family.

The protein is UPF0173 metal-dependent hydrolase Fnod_0635 of Fervidobacterium nodosum (strain ATCC 35602 / DSM 5306 / Rt17-B1).